The following is a 618-amino-acid chain: Protease 4 (618 aa).

The Cytoplasmic portion of the chain corresponds to 1-24 (MRTLWRFIAGFFKWTWRLLNFVRE). The helical transmembrane segment at 25 to 45 (MVLNLFFIFLVLVGVGIWMQV) threads the bilayer. Residues 46 to 618 (SGGDSKETAS…AFCLTCANMR (573 aa)) lie on the Periplasmic side of the membrane. The active-site Proton donor/acceptor is K209. The active-site Nucleophile is S409.

Belongs to the peptidase S49 family. As to quaternary structure, homotetramer.

It localises to the cell inner membrane. With respect to regulation, inhibited by serine hydrolase inhibitor FP-biotin and by antipain. Functionally, digests cleaved signal peptides in vitro, its in vivo function is unknown. This activity is necessary to maintain proper secretion of mature proteins across the membrane. The chain is Protease 4 (sppA) from Escherichia coli (strain K12).